Here is a 148-residue protein sequence, read N- to C-terminus: Fibroblast growth factor 1 (148 aa).

Positions 1–11 (EITTFAALTER) are excised as a propeptide. Asn29 lines the heparin pocket. Positions 123-139 (KKNGKTKLGSRTHFGQK) are heparin-binding.

Belongs to the heparin-binding growth factors family.

It is found in the secreted. The protein localises to the cytoplasm. It localises to the cell cortex. The protein resides in the cytosol. Its subcellular location is the nucleus. Plays an important role in the regulation of cell survival, cell division, angiogenesis, cell differentiation and cell migration. Functions as a potent mitogen in vitro. Acts as a ligand for FGFR1 and integrins. Binds to FGFR1 in the presence of heparin leading to FGFR1 dimerization and activation via sequential autophosphorylation on tyrosine residues which act as docking sites for interacting proteins, leading to the activation of several signaling cascades. Binds to integrins. Its binding to integrins and subsequent ternary complex formation with integrins and FGFR1 are essential for FGF1 signaling. This chain is Fibroblast growth factor 1 (fgf1), found in Cynops pyrrhogaster (Japanese fire-bellied newt).